Reading from the N-terminus, the 701-residue chain is Elongation factor G (701 aa).

Residues 8–290 form the tr-type G domain; it reads ARYRNIGISA…AVIEYLPAPT (283 aa). Residues 17-24, 88-92, and 142-145 each bind GTP; these read AHIDAGKT, DTPGH, and NKMD.

The protein belongs to the TRAFAC class translation factor GTPase superfamily. Classic translation factor GTPase family. EF-G/EF-2 subfamily.

It localises to the cytoplasm. Catalyzes the GTP-dependent ribosomal translocation step during translation elongation. During this step, the ribosome changes from the pre-translocational (PRE) to the post-translocational (POST) state as the newly formed A-site-bound peptidyl-tRNA and P-site-bound deacylated tRNA move to the P and E sites, respectively. Catalyzes the coordinated movement of the two tRNA molecules, the mRNA and conformational changes in the ribosome. The chain is Elongation factor G from Sodalis glossinidius (strain morsitans).